The primary structure comprises 218 residues: Small ribosomal subunit protein uS3 (218 aa).

Residues 38–106 (IRKYIESKLA…RVHINIVEIK (69 aa)) enclose the KH type-2 domain.

It belongs to the universal ribosomal protein uS3 family. In terms of assembly, part of the 30S ribosomal subunit. Forms a tight complex with proteins S10 and S14.

In terms of biological role, binds the lower part of the 30S subunit head. Binds mRNA in the 70S ribosome, positioning it for translation. This Ligilactobacillus salivarius (strain UCC118) (Lactobacillus salivarius) protein is Small ribosomal subunit protein uS3.